The chain runs to 288 residues: Ribosomal RNA small subunit methyltransferase A (288 aa).

6 residues coordinate S-adenosyl-L-methionine: N28, L30, G55, E77, D103, and N123.

This sequence belongs to the class I-like SAM-binding methyltransferase superfamily. rRNA adenine N(6)-methyltransferase family. RsmA subfamily.

Its subcellular location is the cytoplasm. The catalysed reaction is adenosine(1518)/adenosine(1519) in 16S rRNA + 4 S-adenosyl-L-methionine = N(6)-dimethyladenosine(1518)/N(6)-dimethyladenosine(1519) in 16S rRNA + 4 S-adenosyl-L-homocysteine + 4 H(+). Specifically dimethylates two adjacent adenosines (A1518 and A1519) in the loop of a conserved hairpin near the 3'-end of 16S rRNA in the 30S particle. May play a critical role in biogenesis of 30S subunits. The chain is Ribosomal RNA small subunit methyltransferase A from Xanthobacter autotrophicus (strain ATCC BAA-1158 / Py2).